The chain runs to 510 residues: Nucleosome assembly protein 1-like 3 (510 aa).

2 disordered regions span residues 1–99 (MAEA…LGTN) and 161–311 (PTEE…KRED). Residues 35–74 (SSSSSSSTSGSSSSSSTSGSSSSSGSGSSSSSSGSGSTSS) are compositionally biased toward low complexity. The segment covering 161 to 182 (PTEEECEWNSEDEEFSSDEEVQ) has biased composition (acidic residues). Basic and acidic residues-rich tracts occupy residues 200–229 (PKEN…EVPK), 235–246 (KAEEKADSKDCM), and 254–300 (EDPK…VDLK).

It belongs to the nucleosome assembly protein (NAP) family.

It localises to the nucleus. This chain is Nucleosome assembly protein 1-like 3 (NAP1L3), found in Pongo abelii (Sumatran orangutan).